Consider the following 934-residue polypeptide: Diacylglycerol kinase theta (934 aa).

Positions 1–50 (MAAAAEPGARTWPGSGSPRLGSPAGSPVLGISGRTRPGSGPERTSRAIGS) are disordered. Phosphoserine is present on residues S22 and S26. 3 consecutive Phorbol-ester/DAG-type zinc fingers follow at residues 54-102 (GHSF…KTPC), 115-162 (AHCF…CSDC), and 177-228 (HHHW…APEC). A Ras-associating domain is found at 387-486 (TQEILKIYPG…TRFYVAETRA (100 aa)). 2 consecutive short sequence motifs (LXXLL motif) follow at residues 547–551 (LYMLA) and 566–570 (LPDVL). One can recognise a DAGKc domain in the interval 576–713 (PDCCPLLVFV…MDRWTILLDA (138 aa)). Basic residues predominate over residues 905–916 (LRKAKQKPRKAG). Positions 905-934 (LRKAKQKPRKAGANRDTRVDTLPAPEGNPL) are disordered.

This sequence belongs to the eukaryotic diacylglycerol kinase family. As to quaternary structure, interacts with RHOA (constitutively activated, GTP-bound); the interaction inhibits DGKQ. Interacts with PRKCE. Interacts with PRKCH. Interacts with PLCB1. Interacts with NR5A1; the interaction requires both LXXLL motifs in DGKQ and is required for full phosphatidic acid-mediated activation of NR5A1. Post-translationally, phosphorylated by PRKCE and PRKCH in vitro. In terms of tissue distribution, widely expressed in all brain regions, including the cortex and hippocampus with a specific expression in neuronal cells (at protein level).

It is found in the cytoplasm. The protein localises to the cytosol. Its subcellular location is the cell membrane. It localises to the synapse. The protein resides in the cytoskeleton. It is found in the nucleus. The protein localises to the nucleus speckle. Its subcellular location is the nucleus matrix. The catalysed reaction is a 1,2-diacyl-sn-glycerol + ATP = a 1,2-diacyl-sn-glycero-3-phosphate + ADP + H(+). The enzyme catalyses a 1-O-alkyl-sn-glycerol + ATP = a 1-O-alkyl-sn-glycero-3-phosphate + ADP + H(+). It carries out the reaction 1-O-alkyl-2-acyl-sn-glycerol + ATP = 1-O-alkyl-2-acyl-sn-glycero-3-phosphate + ADP + H(+). It catalyses the reaction 1,2-di-(9Z-octadecenoyl)-sn-glycerol + ATP = 1,2-di-(9Z-octadecenoyl)-sn-glycero-3-phosphate + ADP + H(+). The catalysed reaction is 1-O-hexadecyl-sn-glycerol + ATP = 1-O-hexadecyl-sn-glycero-3-phosphate + ADP + H(+). The enzyme catalyses 1-O-hexadecyl-2-acetyl-sn-glycerol + ATP = 1-O-hexadecyl-2-acetyl-sn-glycero-3-phosphate + ADP + H(+). It carries out the reaction 1-octadecanoyl-2-(5Z,8Z,11Z,14Z-eicosatetraenoyl)-sn-glycerol + ATP = 1-octadecanoyl-2-(5Z,8Z,11Z,14Z-eicosatetraenoyl)-sn-glycero-3-phosphate + ADP + H(+). It functions in the pathway lipid metabolism; glycerolipid metabolism. With respect to regulation, activated by phosphatidylserine. Diacylglycerol kinase that converts diacylglycerol/DAG into phosphatidic acid/phosphatidate/PA and regulates the respective levels of these two bioactive lipids. Thereby, acts as a central switch between the signaling pathways activated by these second messengers with different cellular targets and opposite effects in numerous biological processes. Within the adrenocorticotropic hormone signaling pathway, produces phosphatidic acid which in turn activates NR5A1 and subsequent steroidogenic gene transcription. Also functions downstream of the nerve growth factor signaling pathway being specifically activated in the nucleus by the growth factor. Through its diacylglycerol activity also regulates synaptic vesicle endocytosis. In Mus musculus (Mouse), this protein is Diacylglycerol kinase theta (Dgkq).